Consider the following 415-residue polypeptide: Meiotic driver wtf36 (415 aa).

2 disordered regions span residues 1-49 and 67-99; these read MKNK…DLNN and TTPP…SGTA. Positions 11–29 are enriched in basic and acidic residues; the sequence is SMDEMSAKNDNEIDLEKGP. 7 helical membrane-spanning segments follow: residues 105 to 125, 142 to 162, 169 to 189, 205 to 225, 240 to 260, 274 to 294, and 298 to 318; these read FLIK…PAVC, WTLF…LTYF, AVKV…IFLA, VTAI…AQCV, VVII…RSKF, CSIS…FWTL, and FSGL…TKGL.

This sequence belongs to the WTF family. Homomer. Forms protein aggregates. The two isoforms can interact with each other and with themselves. High sequence similarity is required for their interaction.

The protein resides in the spore membrane. The protein localises to the vacuole membrane. It localises to the ascus epiplasm. Its subcellular location is the cytoplasm. It is found in the endoplasmic reticulum membrane. Promotes unequal transmission of alleles from the parental zygote to progeny spores by acting as poison/antidote system where the poison and antidote proteins are produced from the same locus; the poison component is trans-acting and targets all spores within an ascus whereas the antidote component is spore-specific, leading to poisoning of all progeny that do not inherit the allele. Functionally, localizes isoform 2 to the vacuole thereby facilitating its degradation. In terms of biological role, forms toxic aggregates that disrupt spore maturation. In Schizosaccharomyces pombe (Fission yeast), this protein is Meiotic driver wtf36.